We begin with the raw amino-acid sequence, 460 residues long: Probable lipid II flippase MurJ (460 aa).

Helical transmembrane passes span 4–24, 50–70, 95–115, 122–142, 155–175, 228–248, 257–277, 292–312, 336–356, 366–386, and 428–448; these read ILGA…PNLF, FASL…LLVA, IVAI…LGAL, FFAS…ALLI, LSYG…YPLV, IASF…VSYL, LPLA…IAIA, KAWF…IMLS, VFSL…FSLW, AAKI…SLMP, and LVIL…KSWV.

This sequence belongs to the MurJ/MviN family.

Its subcellular location is the cell inner membrane. It functions in the pathway cell wall biogenesis; peptidoglycan biosynthesis. In terms of biological role, involved in peptidoglycan biosynthesis. Transports lipid-linked peptidoglycan precursors from the inner to the outer leaflet of the cytoplasmic membrane. The polypeptide is Probable lipid II flippase MurJ (Helicobacter pylori (strain J99 / ATCC 700824) (Campylobacter pylori J99)).